Consider the following 126-residue polypeptide: MARIAGVDLPNNKRLEVALTYIYGIGWSRAREICEKTGIPCTKRVGELTPDELNTLRKFIDENYKVEGDLRREVQLNIKKLKDMGCYRGIRHARGLPVRGQQTRTNARTRKGKRKTVGGTKKAKAK.

The disordered stretch occupies residues 95 to 126 (GLPVRGQQTRTNARTRKGKRKTVGGTKKAKAK). Basic residues predominate over residues 107–126 (ARTRKGKRKTVGGTKKAKAK).

This sequence belongs to the universal ribosomal protein uS13 family. Part of the 30S ribosomal subunit. Forms a loose heterodimer with protein S19. Forms two bridges to the 50S subunit in the 70S ribosome.

In terms of biological role, located at the top of the head of the 30S subunit, it contacts several helices of the 16S rRNA. In the 70S ribosome it contacts the 23S rRNA (bridge B1a) and protein L5 of the 50S subunit (bridge B1b), connecting the 2 subunits; these bridges are implicated in subunit movement. Contacts the tRNAs in the A and P-sites. This Aquifex aeolicus (strain VF5) protein is Small ribosomal subunit protein uS13.